A 397-amino-acid polypeptide reads, in one-letter code: Protein ROH1D (397 aa).

A helical membrane pass occupies residues 247-267 (LIVPVYTMTTVLLFVMWALVA).

It belongs to the ROH1 family. In terms of assembly, interacts with EXO70C2. As to expression, mostly expressed in mature pollen.

Its subcellular location is the membrane. The protein resides in the cytoplasm. It is found in the cytosol. Its function is as follows. Involved in the regulation of plant growth, and modulates pollen development to ensure male fertility. May also affect the composition of the inner seed coat mucilage layer. This chain is Protein ROH1D, found in Arabidopsis thaliana (Mouse-ear cress).